The sequence spans 435 residues: Casein kinase 1-like protein 12 (435 aa).

Positions 9 to 278 (YRLGRKIGSG…LKRIFRDLFI (270 aa)) constitute a Protein kinase domain. ATP is bound by residues 15-23 (IGSGSFGEI) and Lys-38. Asp-128 serves as the catalytic Proton acceptor. Disordered stretches follow at residues 313 to 363 (VGTS…RGPM) and 394 to 414 (LRNSPVVTTPEGKRSSSTRKH).

The protein belongs to the protein kinase superfamily. CK1 Ser/Thr protein kinase family. Casein kinase I subfamily. In terms of assembly, monomer. In terms of processing, autophosphorylated.

The protein resides in the cytoplasm. It carries out the reaction L-seryl-[protein] + ATP = O-phospho-L-seryl-[protein] + ADP + H(+). It catalyses the reaction L-threonyl-[protein] + ATP = O-phospho-L-threonyl-[protein] + ADP + H(+). Its function is as follows. Casein kinases are operationally defined by their preferential utilization of acidic proteins such as caseins as substrates. It can phosphorylate a large number of proteins. This is Casein kinase 1-like protein 12 from Arabidopsis thaliana (Mouse-ear cress).